Reading from the N-terminus, the 64-residue chain is MPKQKTHSGAKKRFKVTGSGKIMKQQAGMRHNLEVKSSKRKARLNQDQPLAKADMKVAKKLLGR.

Positions 22–44 (IMKQQAGMRHNLEVKSSKRKARL) are disordered.

It belongs to the bacterial ribosomal protein bL35 family.

In Clavibacter sepedonicus (Clavibacter michiganensis subsp. sepedonicus), this protein is Large ribosomal subunit protein bL35.